The chain runs to 247 residues: tRNA (guanine-N(1)-)-methyltransferase (247 aa).

Residues Gly-115 and 134 to 139 contribute to the S-adenosyl-L-methionine site; that span reads IGDFVL.

It belongs to the RNA methyltransferase TrmD family. In terms of assembly, homodimer.

Its subcellular location is the cytoplasm. The enzyme catalyses guanosine(37) in tRNA + S-adenosyl-L-methionine = N(1)-methylguanosine(37) in tRNA + S-adenosyl-L-homocysteine + H(+). Functionally, specifically methylates guanosine-37 in various tRNAs. This chain is tRNA (guanine-N(1)-)-methyltransferase, found in Anaeromyxobacter sp. (strain K).